The primary structure comprises 389 residues: S-adenosylmethionine synthase (389 aa).

His15 is a binding site for ATP. Asp17 lines the Mg(2+) pocket. A K(+)-binding site is contributed by Glu43. The L-methionine site is built by Glu56 and Gln99. The interval 99-109 (QSPDIAQGVNE) is flexible loop. ATP is bound by residues 166–168 (DAK), 234–235 (RF), Asp243, 249–250 (RK), Ala266, and Lys270. Asp243 lines the L-methionine pocket. Lys274 lines the L-methionine pocket.

It belongs to the AdoMet synthase family. Homotetramer; dimer of dimers. Requires Mg(2+) as cofactor. The cofactor is K(+).

It is found in the cytoplasm. The enzyme catalyses L-methionine + ATP + H2O = S-adenosyl-L-methionine + phosphate + diphosphate. It functions in the pathway amino-acid biosynthesis; S-adenosyl-L-methionine biosynthesis; S-adenosyl-L-methionine from L-methionine: step 1/1. In terms of biological role, catalyzes the formation of S-adenosylmethionine (AdoMet) from methionine and ATP. The overall synthetic reaction is composed of two sequential steps, AdoMet formation and the subsequent tripolyphosphate hydrolysis which occurs prior to release of AdoMet from the enzyme. This Chromobacterium violaceum (strain ATCC 12472 / DSM 30191 / JCM 1249 / CCUG 213 / NBRC 12614 / NCIMB 9131 / NCTC 9757 / MK) protein is S-adenosylmethionine synthase.